A 1018-amino-acid chain; its full sequence is Importin-9 (1018 aa).

Positions 35–114 (TEKRIKQLEY…RNILPNGLYD (80 aa)) constitute an Importin N-terminal domain. A disordered region spans residues 921-950 (GKSDEPLTDSEEDGDDEDAPGNPDKPRYIS). Residues 926 to 939 (PLTDSEEDGDDEDA) are compositionally biased toward acidic residues.

This sequence belongs to the importin beta family.

The protein resides in the cytoplasm. The protein localises to the nucleus. Functionally, nuclear transport receptor that mediates nuclear import of proteins. Serves as receptor for nuclear localization signals (NLS) in cargo substrates. Is thought to mediate docking of the importin/substrate complex to the nuclear pore complex (NPC) through binding to nucleoporin and the complex is subsequently translocated through the pore by an energy requiring, Ran-dependent mechanism. Mediates the import of pre-assembled proteasomes into the nucleus during the late stages of sperm development. This Drosophila melanogaster (Fruit fly) protein is Importin-9.